Here is a 256-residue protein sequence, read N- to C-terminus: Transcription factor BHLH094 (256 aa).

The tract at residues 1–125 (MDPAPSLAAE…TPPEPPKQDY (125 aa)) is disordered. The segment covering 79 to 97 (PEAKRLKPMKSSDKNDSLR) has biased composition (basic and acidic residues). Positions 134–147 (QATDSHSLAERARR) are basic motif; degenerate. Residues 134–184 (QATDSHSLAERARREKISERMKILQDLVPGCNKVIGKASVLDEIINYIQSL) enclose the bHLH domain. The interval 148–184 (EKISERMKILQDLVPGCNKVIGKASVLDEIINYIQSL) is helix-loop-helix motif.

Belongs to the bHLH protein family. Interacts with RSS3. Forms a ternary complex with RSS3 and TIFY11A/JAZ9 in the nucleus.

It is found in the nucleus. Functionally, transcription factor that forms a ternary complex with RSS3 and TIFY11A/JAZ9 to negatively regulate jasmonate-responsive genes. The sequence is that of Transcription factor BHLH094 from Oryza sativa subsp. japonica (Rice).